The primary structure comprises 824 residues: Leucine--tRNA ligase (824 aa).

Residues 42-52 (PYPSGRIHMGH) carry the 'HIGH' region motif. Residues 581 to 585 (KMSKS) carry the 'KMSKS' region motif. An ATP-binding site is contributed by lysine 584.

It belongs to the class-I aminoacyl-tRNA synthetase family.

Its subcellular location is the cytoplasm. It catalyses the reaction tRNA(Leu) + L-leucine + ATP = L-leucyl-tRNA(Leu) + AMP + diphosphate. This Geotalea uraniireducens (strain Rf4) (Geobacter uraniireducens) protein is Leucine--tRNA ligase.